A 93-amino-acid chain; its full sequence is UPF0358 protein BBR47_22520 (93 aa).

Belongs to the UPF0358 family.

In Brevibacillus brevis (strain 47 / JCM 6285 / NBRC 100599), this protein is UPF0358 protein BBR47_22520.